A 400-amino-acid polypeptide reads, in one-letter code: Cytohesin-2 (400 aa).

Positions 10–67 (DLTPEERMELENIRRRKQELLVEIQRLREELSEAMSEVEGLEANEGSKTLQRNRKMAM) form a coiled coil. One can recognise an SEC7 domain in the interval 72-201 (FNMDPKKGIQ…VIMLNTSLHN (130 aa)). The region spanning 259–376 (NPDREGWLLK…WIKSIQAAVS (118 aa)) is the PH domain. A 1,2-diacyl-sn-glycero-3-phospho-(1D-myo-inositol-3,4,5-trisphosphate)-binding positions include 268–276 (KLGGGRVKT), Arg-280, Tyr-291, Arg-301, Lys-339, Asn-350, and His-351. The segment at 387–395 (RKKRISVKK) is C-terminal autoinhibitory region.

Heteromer. Composed of TAMALIN, CYTH2 and at least one GRM1. Interacts with ARRB1. Interacts with ARL4D; the interaction is direct. Directly interacts with CCDC120 through the coiled coil domain; this interaction stabilizes CCDC120, possibly by preventing its ubiquitination, and is required for neurite growth in a neuroblastoma cell line. Interacts with FRMD4A. Interacts (via N-terminal domain) with INAVA (via N-terminal domain). Present in all tissues tested, with highest protein levels in brain and adrenal.

The protein resides in the cell membrane. It is found in the cytoplasm. It localises to the cell projection. The protein localises to the growth cone. Its subcellular location is the cell junction. The protein resides in the tight junction. It is found in the adherens junction. Its function is as follows. Acts as a guanine-nucleotide exchange factor (GEF). Promotes guanine-nucleotide exchange on ARF1, ARF3 and ARF6. Activates ARF factors through replacement of GDP with GTP. The cell membrane form, in association with ARL4 proteins, recruits ARF6 to the plasma membrane. Involved in neurite growth. The protein is Cytohesin-2 (Cyth2) of Mus musculus (Mouse).